Here is a 318-residue protein sequence, read N- to C-terminus: UDP-3-O-acylglucosamine N-acyltransferase (318 aa).

Residue His231 is the Proton acceptor of the active site.

This sequence belongs to the transferase hexapeptide repeat family. LpxD subfamily. Homotrimer.

The enzyme catalyses a UDP-3-O-[(3R)-3-hydroxyacyl]-alpha-D-glucosamine + a (3R)-hydroxyacyl-[ACP] = a UDP-2-N,3-O-bis[(3R)-3-hydroxyacyl]-alpha-D-glucosamine + holo-[ACP] + H(+). It participates in bacterial outer membrane biogenesis; LPS lipid A biosynthesis. Functionally, catalyzes the N-acylation of UDP-3-O-acylglucosamine using 3-hydroxyacyl-ACP as the acyl donor. Is involved in the biosynthesis of lipid A, a phosphorylated glycolipid that anchors the lipopolysaccharide to the outer membrane of the cell. This is UDP-3-O-acylglucosamine N-acyltransferase from Campylobacter jejuni subsp. doylei (strain ATCC BAA-1458 / RM4099 / 269.97).